A 790-amino-acid polypeptide reads, in one-letter code: Probable quinate dehydrogenase (quinone) (790 aa).

Helical transmembrane passes span 22–42 (GSWY…LIVL), 48–68 (ALVY…DAGL), 77–94 (LMLP…WPAL), and 106–126 (AYGV…GMFV). The interval 171–200 (RSNGRPAAGSPGPTTPGEIANSDGNGAEDQ) is disordered. A compositionally biased stretch (low complexity) spans 174-187 (GRPAAGSPGPTTPG).

Belongs to the bacterial PQQ dehydrogenase family. Requires pyrroloquinoline quinone as cofactor.

It is found in the cell membrane. The enzyme catalyses L-quinate + a quinone = 3-dehydroquinate + a quinol. Its pathway is aromatic compound metabolism; 3,4-dihydroxybenzoate biosynthesis; 3-dehydroquinate from D-quinate (PQQ route): step 1/1. This chain is Probable quinate dehydrogenase (quinone) (qumA), found in Xanthomonas campestris pv. juglandis (Xanthomonas arboricola pv. juglandis).